Reading from the N-terminus, the 88-residue chain is Large ribosomal subunit protein bL27 (88 aa).

A disordered region spans residues 1–24 (MAHKKGTGSTRNGRDSNSKRLGVK).

The protein belongs to the bacterial ribosomal protein bL27 family.

The chain is Large ribosomal subunit protein bL27 from Synechococcus sp. (strain CC9311).